The following is a 619-amino-acid chain: ATP-dependent zinc metalloprotease FtsH (619 aa).

Over 1-5 (MKYFK) the chain is Cytoplasmic. Residues 6 to 26 (GISFYIIIFILILVIITFFTA) form a helical membrane-spanning segment. Residues 27–110 (TDNPPKMSYS…VTQPPQPPWW (84 aa)) are Extracellular-facing. Residues 111–131 (VSMLPTVGLVIILILIWFFFI) traverse the membrane as a helical segment. Residues 132-619 (QQSQGGGGGN…GSSQTPQLEG (488 aa)) are Cytoplasmic-facing. 204–211 (GPPGTGKT) contributes to the ATP binding site. Residue H426 coordinates Zn(2+). E427 is an active-site residue. Residues H430 and D502 each coordinate Zn(2+).

This sequence in the central section; belongs to the AAA ATPase family. It in the C-terminal section; belongs to the peptidase M41 family. As to quaternary structure, homohexamer. Zn(2+) is required as a cofactor.

Its subcellular location is the cell membrane. In terms of biological role, acts as a processive, ATP-dependent zinc metallopeptidase for both cytoplasmic and membrane proteins. Plays a role in the quality control of integral membrane proteins. The polypeptide is ATP-dependent zinc metalloprotease FtsH (Ruminiclostridium cellulolyticum (strain ATCC 35319 / DSM 5812 / JCM 6584 / H10) (Clostridium cellulolyticum)).